A 223-amino-acid chain; its full sequence is Probable transaldolase (223 aa).

Lys92 serves as the catalytic Schiff-base intermediate with substrate.

Belongs to the transaldolase family. Type 3B subfamily.

The protein localises to the cytoplasm. It carries out the reaction D-sedoheptulose 7-phosphate + D-glyceraldehyde 3-phosphate = D-erythrose 4-phosphate + beta-D-fructose 6-phosphate. The protein operates within carbohydrate degradation; pentose phosphate pathway; D-glyceraldehyde 3-phosphate and beta-D-fructose 6-phosphate from D-ribose 5-phosphate and D-xylulose 5-phosphate (non-oxidative stage): step 2/3. In terms of biological role, transaldolase is important for the balance of metabolites in the pentose-phosphate pathway. This chain is Probable transaldolase, found in Thermus thermophilus (strain ATCC 27634 / DSM 579 / HB8).